A 60-amino-acid polypeptide reads, in one-letter code: Large ribosomal subunit protein bL32 (60 aa).

It belongs to the bacterial ribosomal protein bL32 family.

The protein is Large ribosomal subunit protein bL32 of Clostridium perfringens (strain ATCC 13124 / DSM 756 / JCM 1290 / NCIMB 6125 / NCTC 8237 / Type A).